A 570-amino-acid chain; its full sequence is Spermatocyte protein spe-26 (570 aa).

Kelch repeat units follow at residues 244-291 (VLII…IVDG), 293-338 (LYLF…SVVY), 341-393 (RIYV…VFEN), 395-440 (IYVS…NHGN), 442-487 (LLIV…SYKG), and 489-535 (LFSV…VAPN).

Testis, in both spermatogonial cells and spermatocytes.

The protein localises to the cytoplasm. Its subcellular location is the cytoskeleton. In terms of biological role, may play a role in the spermatocyte cytoskeleton, possibly interacting with actin. The polypeptide is Spermatocyte protein spe-26 (spe-26) (Caenorhabditis elegans).